Consider the following 344-residue polypeptide: Aurora kinase B (344 aa).

Residues Met1–Ser22 form a disordered region. Thr35 is subject to Phosphothreonine. A Phosphoserine modification is found at Ser62. Thr64 carries the phosphothreonine modification. The Protein kinase domain maps to Phe77–Val327. Residues Leu83–Val91 and Lys106 each bind ATP. Asp200 (proton acceptor) is an active-site residue. Lys215 bears the N6-acetyllysine mark. Position 227 is a phosphoserine (Ser227). Thr232 is subject to Phosphothreonine; by autocatalysis.

The protein belongs to the protein kinase superfamily. Ser/Thr protein kinase family. Aurora subfamily. Component of the chromosomal passenger complex (CPC) composed of at least BIRC5/survivin, CDCA8/borealin, INCENP, AURKB or AURKC; predominantly independent AURKB- and AURKC-containing complexes exist. Associates with RACGAP1 during M phase. Interacts with SPDYC; this interaction may be required for proper localization of active, Thr-232-phosphorylated AURKB form during prometaphase and metaphase. Interacts with p53/TP53. Interacts (via the middle kinase domain) with NOC2L (via the N- and C-terminus domains). Interacts with CDCA1. Interacts with EVI5. Interacts with JTB. Interacts with NDC80. Interacts with PSMA3. Interacts with RNF2/RING1B. Interacts with SEPTIN1. Interacts with SIRT2. Interacts with TACC1. Interacts with TTC28. Post-translationally, the phosphorylation of Thr-232 requires the binding to INCENP and occurs by means of an autophosphorylation mechanism. Thr-232 phosphorylation is indispensable for the AURKB kinase activity. Acetylated at Lys-215 by KAT5 at kinetochores, increasing AURKB activity and promoting accurate chromosome segregation in mitosis. In terms of processing, ubiquitinated by different BCR (BTB-CUL3-RBX1) E3 ubiquitin ligase complexes. Ubiquitinated by the BCR(KLHL9-KLHL13) E3 ubiquitin ligase complex, ubiquitination leads to removal from mitotic chromosomes and is required for cytokinesis. During anaphase, the BCR(KLHL21) E3 ubiquitin ligase complex recruits the CPC complex from chromosomes to the spindle midzone and mediates the ubiquitination of AURKB. Ubiquitination of AURKB by BCR(KLHL21) E3 ubiquitin ligase complex may not lead to its degradation by the proteasome. Deubiquitinated by USP35; inhibiting CDH1-mediated degradation of AURKB. As to expression, high level expression seen in the thymus. It is also expressed in the spleen, lung, testis, colon, placenta and fetal liver. Expressed during S and G2/M phase and expression is up-regulated in cancer cells during M phase. In terms of tissue distribution, not expressed in normal liver, high expression in metastatic liver.

The protein resides in the nucleus. Its subcellular location is the chromosome. It is found in the centromere. The protein localises to the kinetochore. It localises to the cytoplasm. The protein resides in the cytoskeleton. Its subcellular location is the spindle. It is found in the midbody. It catalyses the reaction L-seryl-[protein] + ATP = O-phospho-L-seryl-[protein] + ADP + H(+). The catalysed reaction is L-threonyl-[protein] + ATP = O-phospho-L-threonyl-[protein] + ADP + H(+). Its activity is regulated as follows. Activity is greatly increased when AURKB is within the CPC complex. In particular, AURKB-phosphorylated INCENP acts as an activator of AURKB. Positive feedback between HASPIN and AURKB contributes to CPC localization. Inhibited by ZM447439. Its function is as follows. Serine/threonine-protein kinase component of the chromosomal passenger complex (CPC), a complex that acts as a key regulator of mitosis. The CPC complex has essential functions at the centromere in ensuring correct chromosome alignment and segregation and is required for chromatin-induced microtubule stabilization and spindle assembly. Involved in the bipolar attachment of spindle microtubules to kinetochores and is a key regulator for the onset of cytokinesis during mitosis. Required for central/midzone spindle assembly and cleavage furrow formation. Key component of the cytokinesis checkpoint, a process required to delay abscission to prevent both premature resolution of intercellular chromosome bridges and accumulation of DNA damage: phosphorylates CHMP4C, leading to retain abscission-competent VPS4 (VPS4A and/or VPS4B) at the midbody ring until abscission checkpoint signaling is terminated at late cytokinesis. AURKB phosphorylates the CPC complex subunits BIRC5/survivin, CDCA8/borealin and INCENP. Phosphorylation of INCENP leads to increased AURKB activity. Other known AURKB substrates involved in centromeric functions and mitosis are CENPA, DES/desmin, GPAF, KIF2C, NSUN2, RACGAP1, SEPTIN1, VIM/vimentin, HASPIN, and histone H3. A positive feedback loop involving HASPIN and AURKB contributes to localization of CPC to centromeres. Phosphorylation of VIM controls vimentin filament segregation in cytokinetic process, whereas histone H3 is phosphorylated at 'Ser-10' and 'Ser-28' during mitosis (H3S10ph and H3S28ph, respectively). AURKB is also required for kinetochore localization of BUB1 and SGO1. Phosphorylation of p53/TP53 negatively regulates its transcriptional activity. Key regulator of active promoters in resting B- and T-lymphocytes: acts by mediating phosphorylation of H3S28ph at active promoters in resting B-cells, inhibiting RNF2/RING1B-mediated ubiquitination of histone H2A and enhancing binding and activity of the USP16 deubiquitinase at transcribed genes. Acts as an inhibitor of CGAS during mitosis: catalyzes phosphorylation of the N-terminus of CGAS during the G2-M transition, blocking CGAS liquid phase separation and activation, and thereby preventing CGAS-induced autoimmunity. Phosphorylates KRT5 during anaphase and telophase. Phosphorylates ATXN10 which promotes phosphorylation of ATXN10 by PLK1 and may play a role in the regulation of cytokinesis and stimulating the proteasomal degradation of ATXN10. In Homo sapiens (Human), this protein is Aurora kinase B (AURKB).